Here is a 635-residue protein sequence, read N- to C-terminus: Dihydrolipoyllysine-residue acetyltransferase component of pyruvate dehydrogenase complex, mitochondrial (635 aa).

Residues 83–160 (GKEITMPALS…EINKPIAIIV (78 aa)) enclose the Lipoyl-binding 1 domain. Residue lysine 124 is modified to N6-lipoyllysine. The segment at 171-204 (KNYKPSSQASSTPVQEEAPKPKQEAPKKSTKTYP) is disordered. Residues 174–184 (KPSSQASSTPV) are compositionally biased toward polar residues. The segment covering 187–197 (EAPKPKQEAPK) has biased composition (basic and acidic residues). Positions 206–283 (HKVVGMPALS…QINQPVCIIV (78 aa)) constitute a Lipoyl-binding 2 domain. The residue at position 247 (lysine 247) is an N6-lipoyllysine. A disordered region spans residues 295-338 (YSVEEQSSSSSSSSQESTPSSSSSSSQESTPSQSSSQQTTRKSG). Low complexity predominate over residues 298-334 (EEQSSSSSSSSQESTPSSSSSSSQESTPSQSSSQQTT). Residues 342 to 379 (FATPAARFEASSKGYDLSAINGTGPNNRILKADVLEFV) form the Peripheral subunit-binding (PSBD) domain. The interval 382 to 413 (KQEVAQQQQQQTTTTTKKPTTPTSSGEFTDIP) is disordered. Over residues 387–404 (QQQQQQTTTTTKKPTTPT) the composition is skewed to low complexity. A catalytic region spans residues 403 to 635 (PTSSGEFTDI…YVENPIKLIL (233 aa)).

This sequence belongs to the 2-oxoacid dehydrogenase family. 20 to 30 alpha(2)-beta(2) tetramers of E1 + 6 homodimers of E3 + 60 copies of E2. Requires (R)-lipoate as cofactor.

The protein localises to the mitochondrion matrix. The catalysed reaction is N(6)-[(R)-dihydrolipoyl]-L-lysyl-[protein] + acetyl-CoA = N(6)-[(R)-S(8)-acetyldihydrolipoyl]-L-lysyl-[protein] + CoA. Functionally, the pyruvate dehydrogenase complex catalyzes the overall conversion of pyruvate to acetyl-CoA and CO(2). It contains multiple copies of three enzymatic components: pyruvate dehydrogenase (E1), dihydrolipoamide acetyltransferase (E2) and lipoamide dehydrogenase (E3). In Dictyostelium discoideum (Social amoeba), this protein is Dihydrolipoyllysine-residue acetyltransferase component of pyruvate dehydrogenase complex, mitochondrial (pdhC).